The chain runs to 118 residues: uncharacterized protein (118 aa).

The interval 25–85 (AEQPGSGGIA…SSSSTPSRAR (61 aa)) is disordered. The span at 71 to 83 (RPSASSSSSTPSR) shows a compositional bias: low complexity.

This is an uncharacterized protein from Azospirillum brasilense.